Reading from the N-terminus, the 378-residue chain is Lipoyl synthase, mitochondrial (378 aa).

Positions 109, 114, 120, 140, 144, 147, and 356 each coordinate [4Fe-4S] cluster. In terms of domain architecture, Radical SAM core spans 125 to 345 (ETGTATATIM…QTLGMEMGFR (221 aa)).

The protein belongs to the radical SAM superfamily. Lipoyl synthase family. The cofactor is [4Fe-4S] cluster.

The protein localises to the mitochondrion. The enzyme catalyses [[Fe-S] cluster scaffold protein carrying a second [4Fe-4S](2+) cluster] + N(6)-octanoyl-L-lysyl-[protein] + 2 oxidized [2Fe-2S]-[ferredoxin] + 2 S-adenosyl-L-methionine + 4 H(+) = [[Fe-S] cluster scaffold protein] + N(6)-[(R)-dihydrolipoyl]-L-lysyl-[protein] + 4 Fe(3+) + 2 hydrogen sulfide + 2 5'-deoxyadenosine + 2 L-methionine + 2 reduced [2Fe-2S]-[ferredoxin]. The protein operates within protein modification; protein lipoylation via endogenous pathway; protein N(6)-(lipoyl)lysine from octanoyl-[acyl-carrier-protein]: step 2/2. Its function is as follows. Catalyzes the radical-mediated insertion of two sulfur atoms into the C-6 and C-8 positions of the octanoyl moiety bound to the lipoyl domains of lipoate-dependent enzymes, thereby converting the octanoylated domains into lipoylated derivatives. The polypeptide is Lipoyl synthase, mitochondrial (Medicago truncatula (Barrel medic)).